Here is a 309-residue protein sequence, read N- to C-terminus: GDP-6-deoxy-D-mannose reductase (309 aa).

Residues 11 to 12 (FV), Arg32, 47 to 48 (DI), and 71 to 73 (AKS) contribute to the NADP(+) site. A substrate-binding site is contributed by 114 to 115 (SS). Tyr140 lines the NADP(+) pocket. Substrate contacts are provided by residues Asn169, Asp183, Arg209, and 269–272 (RPSE).

It belongs to the NAD(P)-dependent epimerase/dehydratase family. GDP-6-deoxy-D-mannose reductase subfamily.

It catalyses the reaction GDP-alpha-D-rhamnose + NAD(+) = GDP-4-dehydro-alpha-D-rhamnose + NADH + H(+). The enzyme catalyses GDP-alpha-D-rhamnose + NADP(+) = GDP-4-dehydro-alpha-D-rhamnose + NADPH + H(+). Functionally, reductase that catalyzes the conversion of GDP-6-deoxy-D-mannose to GDP-4-dehydro-6-deoxy-D-mannose (GDP-D-rhamnose). The protein is GDP-6-deoxy-D-mannose reductase (rmd) of Aneurinibacillus thermoaerophilus.